The primary structure comprises 208 residues: Thymidylate kinase (208 aa).

Residue 10-17 coordinates ATP; it reads GPEGSGKS.

This sequence belongs to the thymidylate kinase family.

It carries out the reaction dTMP + ATP = dTDP + ADP. Its function is as follows. Phosphorylation of dTMP to form dTDP in both de novo and salvage pathways of dTTP synthesis. This Bacillus cytotoxicus (strain DSM 22905 / CIP 110041 / 391-98 / NVH 391-98) protein is Thymidylate kinase.